Consider the following 144-residue polypeptide: RNA-binding protein 1 (144 aa).

The 74-residue stretch at 11–84 folds into the RRM domain; sequence CKVYVGNLGS…TRIRVEMSSG (74 aa). Positions 78–115 are disordered; that stretch reads RVEMSSGRSRDRRRGEGGSSGRSGSGRYRITPSARTTS.

The protein belongs to the splicing factor SR family. In terms of assembly, interacts with x16 (via Arg/Ser-rich region). In terms of processing, extensively phosphorylated on serine residues in the RS domain. Post-translationally, the tandem heptapeptide repeats in the C-terminal domain (CTD) can be highly phosphorylated. The phosphorylation activates Pol II. Phosphorylation occurs at residues 'Ser-2', 'Ser-5' and 'Ser-7' of the heptapeptide repeat and is mediated by P-TEFb. Dephosphorylated by the INTAC complex when transcripts are unfavorably configured for transcriptional elongation, leading to premature transcription termination: dephosphorylation is mediated by the mts/PP2A component of the INTAC complex. As to expression, ubiquitous.

The protein resides in the nucleus. Its function is as follows. Contributes to the activation of female-specific DSX splicing in vivo by recognizing the RBP1 target sequences within the purine-rich polypyrimidine tract of the female-specific 3' splice site. This is RNA-binding protein 1 (Rbp1) from Drosophila melanogaster (Fruit fly).